The following is a 105-amino-acid chain: uncharacterized protein (105 aa).

A helical membrane pass occupies residues 4–26 (TQILLILFVGILVTTPHDIFIII).

It localises to the membrane. This is an uncharacterized protein from Rickettsia conorii (strain ATCC VR-613 / Malish 7).